Consider the following 904-residue polypeptide: Protein translocase subunit SecA (904 aa).

Residues Gln89, 107–111, and Asp496 contribute to the ATP site; that span reads GEGKT. The tract at residues 870 to 904 is disordered; the sequence is GGFQELSSGTPSPTVTVTTSSGGGTERKTSRRRKR. Residues 876–889 show a composition bias toward low complexity; it reads SSGTPSPTVTVTTS.

This sequence belongs to the SecA family. In terms of assembly, monomer and homodimer. Part of the essential Sec protein translocation apparatus which comprises SecA, SecYEG and auxiliary proteins SecDF. Other proteins may also be involved.

Its subcellular location is the cell inner membrane. The protein resides in the cytoplasm. The enzyme catalyses ATP + H2O + cellular proteinSide 1 = ADP + phosphate + cellular proteinSide 2.. Functionally, part of the Sec protein translocase complex. Interacts with the SecYEG preprotein conducting channel. Has a central role in coupling the hydrolysis of ATP to the transfer of proteins into and across the cell membrane, serving as an ATP-driven molecular motor driving the stepwise translocation of polypeptide chains across the membrane. The protein is Protein translocase subunit SecA of Leptospira borgpetersenii serovar Hardjo-bovis (strain L550).